The following is a 401-amino-acid chain: Inactive (1R,4R,5S)-(-)-guaia-6,10(14)-diene synthase (401 aa).

A disordered region spans residues 1–20; sequence MVKFDSGSESEMTNGDELHI. Positions 134 and 139 each coordinate Mg(2+). A DDXXD motif motif is present at residues 134 to 138; it reads DDQFD. R242 is a binding site for substrate. Residue S292 coordinates Mg(2+). K295 lines the substrate pocket. Residue D296 coordinates Mg(2+). Residue 375 to 376 participates in substrate binding; sequence RY.

The protein belongs to the terpene synthase family. The cofactor is Mg(2+).

The sequence is that of Inactive (1R,4R,5S)-(-)-guaia-6,10(14)-diene synthase from Gibberella fujikuroi (strain CBS 195.34 / IMI 58289 / NRRL A-6831) (Bakanae and foot rot disease fungus).